A 364-amino-acid chain; its full sequence is Spermidine/putrescine import ATP-binding protein PotA (364 aa).

The 231-residue stretch at 5–235 (LSFKDVSKGF…PVNRFVADFI (231 aa)) folds into the ABC transporter domain. Residue 37-44 (GPSGCGKT) participates in ATP binding.

It belongs to the ABC transporter superfamily. Spermidine/putrescine importer (TC 3.A.1.11.1) family. In terms of assembly, the complex is composed of two ATP-binding proteins (PotA), two transmembrane proteins (PotB and PotC) and a solute-binding protein (PotD).

It localises to the cell membrane. It carries out the reaction ATP + H2O + polyamine-[polyamine-binding protein]Side 1 = ADP + phosphate + polyamineSide 2 + [polyamine-binding protein]Side 1.. Part of the ABC transporter complex PotABCD involved in spermidine/putrescine import. Responsible for energy coupling to the transport system. This Staphylococcus epidermidis (strain ATCC 35984 / DSM 28319 / BCRC 17069 / CCUG 31568 / BM 3577 / RP62A) protein is Spermidine/putrescine import ATP-binding protein PotA.